Consider the following 944-residue polypeptide: E3 ubiquitin-protein ligase HACE1 (944 aa).

ANK repeat units follow at residues 23-55 (LPED…NSKF), 64-93 (VKRS…DPNY), 97-126 (SGCT…DVNI), 130-159 (EGLT…NVDV), 163-192 (MGQT…DINR), 196-226 (SGAT…YLPD), and 228-253 (NGVT…QHHP). The region spanning 609 to 944 (NCEKLKQGIA…HCGSYGYTMA (336 aa)) is the HECT domain. Catalysis depends on C911, which acts as the Glycyl thioester intermediate.

The protein resides in the golgi apparatus. The protein localises to the golgi stack membrane. It localises to the cytoplasm. It is found in the endoplasmic reticulum. The catalysed reaction is S-ubiquitinyl-[E2 ubiquitin-conjugating enzyme]-L-cysteine + [acceptor protein]-L-lysine = [E2 ubiquitin-conjugating enzyme]-L-cysteine + N(6)-ubiquitinyl-[acceptor protein]-L-lysine.. The protein operates within protein modification; protein ubiquitination. Its function is as follows. E3 ubiquitin-protein ligase involved in Golgi membrane fusion and regulation of small GTPases. Acts as a regulator of Golgi membrane dynamics during the cell cycle: recruited to Golgi membrane by Rab proteins and regulates postmitotic Golgi membrane fusion. Acts by mediating ubiquitination during mitotic Golgi disassembly, ubiquitination serving as a signal for Golgi reassembly later, after cell division. The sequence is that of E3 ubiquitin-protein ligase HACE1 (hace1) from Xenopus laevis (African clawed frog).